The primary structure comprises 223 residues: Putative archaetidylserine decarboxylase proenzyme (223 aa).

S183 acts as the Schiff-base intermediate with substrate; via pyruvic acid in catalysis. The residue at position 183 (S183) is a Pyruvic acid (Ser); by autocatalysis.

The protein belongs to the phosphatidylserine decarboxylase family. PSD-A subfamily. As to quaternary structure, heterodimer of a large membrane-associated beta subunit and a small pyruvoyl-containing alpha subunit. Requires pyruvate as cofactor. Post-translationally, is synthesized initially as an inactive proenzyme. Formation of the active enzyme involves a self-maturation process in which the active site pyruvoyl group is generated from an internal serine residue via an autocatalytic post-translational modification. Two non-identical subunits are generated from the proenzyme in this reaction, and the pyruvate is formed at the N-terminus of the alpha chain, which is derived from the carboxyl end of the proenzyme. The post-translation cleavage follows an unusual pathway, termed non-hydrolytic serinolysis, in which the side chain hydroxyl group of the serine supplies its oxygen atom to form the C-terminus of the beta chain, while the remainder of the serine residue undergoes an oxidative deamination to produce ammonia and the pyruvoyl prosthetic group on the alpha chain.

Its subcellular location is the cell membrane. The catalysed reaction is archaetidylserine + H(+) = archaetidylethanolamine + CO2. Catalyzes the formation of archaetidylethanolamine (PtdEtn) from archaetidylserine (PtdSer). The protein is Putative archaetidylserine decarboxylase proenzyme of Methanothermobacter thermautotrophicus (strain ATCC 29096 / DSM 1053 / JCM 10044 / NBRC 100330 / Delta H) (Methanobacterium thermoautotrophicum).